We begin with the raw amino-acid sequence, 129 residues long: Protein yippee-like (129 aa).

Residues 12-109 (KIYSCKHCGT…LERFKITGPD (98 aa)) enclose the Yippee domain. Positions 16, 19, 72, and 75 each coordinate Zn(2+).

This sequence belongs to the yippee family.

The sequence is that of Protein yippee-like from Solanum tuberosum (Potato).